The chain runs to 130 residues: Small ribosomal subunit protein uS9 (130 aa).

The protein belongs to the universal ribosomal protein uS9 family.

The sequence is that of Small ribosomal subunit protein uS9 from Carboxydothermus hydrogenoformans (strain ATCC BAA-161 / DSM 6008 / Z-2901).